Here is a 257-residue protein sequence, read N- to C-terminus: 5'-nucleotidase SurE (257 aa).

Positions 8, 9, 40, and 93 each coordinate a divalent metal cation.

Belongs to the SurE nucleotidase family. A divalent metal cation is required as a cofactor.

The protein localises to the cytoplasm. The catalysed reaction is a ribonucleoside 5'-phosphate + H2O = a ribonucleoside + phosphate. Functionally, nucleotidase that shows phosphatase activity on nucleoside 5'-monophosphates. The sequence is that of 5'-nucleotidase SurE from Phenylobacterium zucineum (strain HLK1).